The following is a 188-amino-acid chain: Protease-associated domain-containing protein 1 (188 aa).

Residues 1 to 21 (MVPGAAGWCCLVLWLPACVAA) form the signal peptide. Positions 83–163 (IQDQIALVER…RSLEQHGLPW (81 aa)) constitute a PA domain. Residue asparagine 171 is glycosylated (N-linked (GlcNAc...) asparagine).

Post-translationally, N-glycosylated; required for efficient secretion. As to expression, highly expressed in skeletal muscle, heart and liver. Expressed at intermediate level in kidney.

The protein resides in the secreted. In terms of biological role, plays a role in the modulation of physical activity and adiposity. The polypeptide is Protease-associated domain-containing protein 1 (Homo sapiens (Human)).